A 349-amino-acid polypeptide reads, in one-letter code: S-adenosylmethionine:tRNA ribosyltransferase-isomerase (349 aa).

This sequence belongs to the QueA family. Monomer.

The protein localises to the cytoplasm. The catalysed reaction is 7-aminomethyl-7-carbaguanosine(34) in tRNA + S-adenosyl-L-methionine = epoxyqueuosine(34) in tRNA + adenine + L-methionine + 2 H(+). It functions in the pathway tRNA modification; tRNA-queuosine biosynthesis. Its function is as follows. Transfers and isomerizes the ribose moiety from AdoMet to the 7-aminomethyl group of 7-deazaguanine (preQ1-tRNA) to give epoxyqueuosine (oQ-tRNA). This chain is S-adenosylmethionine:tRNA ribosyltransferase-isomerase, found in Pseudomonas fluorescens (strain SBW25).